The primary structure comprises 158 residues: Endoribonuclease YbeY (158 aa).

Zn(2+) is bound by residues H118, H122, and H128.

The protein belongs to the endoribonuclease YbeY family. Requires Zn(2+) as cofactor.

It localises to the cytoplasm. Its function is as follows. Single strand-specific metallo-endoribonuclease involved in late-stage 70S ribosome quality control and in maturation of the 3' terminus of the 16S rRNA. This is Endoribonuclease YbeY from Haemophilus ducreyi (strain 35000HP / ATCC 700724).